A 368-amino-acid chain; its full sequence is MSAQSVEEDSILIIPTPDEEEKILRVKLEEDPDGEEGSSIPWNHLPDPEIFRQRFRQFGYQDSPGPREAVSQLRELCRLWLRPETHTKEQILELVVLEQFVAILPKELQTWVRDHHPENGEEAVTVLEDLESELDDPGQPVSLRRRKREVLVEDMVSQEEAQGLPSSELDAVENQLKWASWELHSLRHCDDDGRTENGALAPKQELPSALESHEVPGTLNMGVPQIFKYGETCFPKGRFERKRNPSRKKQHICDECGKHFSQGSALILHQRIHSGEKPYGCVECGKAFSRSSILVQHQRVHTGEKPYKCLECGKAFSQNSGLINHQRIHTGEKPYECVQCGKSYSQSSNLFRHQRRHNAEKLLNVVKV.

K22 is covalently cross-linked (Glycyl lysine isopeptide (Lys-Gly) (interchain with G-Cter in SUMO2)). K27 is covalently cross-linked (Glycyl lysine isopeptide (Lys-Gly) (interchain with G-Cter in SUMO1); alternate). K27 participates in a covalent cross-link: Glycyl lysine isopeptide (Lys-Gly) (interchain with G-Cter in SUMO2); alternate. Residues 52–134 (RQRFRQFGYQ…TVLEDLESEL (83 aa)) enclose the SCAN box domain. A phosphoserine mark is found at S132 and S142. Glycyl lysine isopeptide (Lys-Gly) (interchain with G-Cter in SUMO2) cross-links involve residues K147, K177, and K236. Residues 251–273 (HICDECGKHFSQGSALILHQRIH) form a C2H2-type 1 zinc finger. The interval 251–301 (HICDECGKHFSQGSALILHQRIHSGEKPYGCVECGKAFSRSSILVQHQRVH) is necessary and sufficient for nuclear localization. S274 bears the Phosphoserine mark. Glycyl lysine isopeptide (Lys-Gly) (interchain with G-Cter in SUMO2) cross-links involve residues K277 and K286. 3 consecutive C2H2-type zinc fingers follow at residues 279 to 301 (YGCVECGKAFSRSSILVQHQRVH), 307 to 329 (YKCLECGKAFSQNSGLINHQRIH), and 335 to 357 (YECVQCGKSYSQSSNLFRHQRRH). Position 292 is a phosphoserine (S292). Y335 carries the phosphotyrosine modification. Residues K361 and K367 each participate in a glycyl lysine isopeptide (Lys-Gly) (interchain with G-Cter in SUMO2) cross-link.

The protein belongs to the krueppel C2H2-type zinc-finger protein family. Post-translationally, sumoylated. As to expression, expressed in many tissues except in heart.

It localises to the nucleus. Functionally, transcription factor required for myelination of differentiated oligodendrocytes. Required for the conversion of oligodendrocytes from the premyelinating to the myelinating state. In the developing central nervous system (CNS), involved in the maintenance in the progenitor stage by promoting the cell cycle. Specifically binds to the 5'-TCAT-3' DNA sequence. Has transcription repressor activity in vitro. This is Zinc finger protein 24 (ZNF24) from Homo sapiens (Human).